A 333-amino-acid chain; its full sequence is 4-hydroxy-3-methylbut-2-enyl diphosphate reductase (333 aa).

Cys34 contacts [4Fe-4S] cluster. (2E)-4-hydroxy-3-methylbut-2-enyl diphosphate is bound by residues His63 and His96. Residues His63 and His96 each coordinate dimethylallyl diphosphate. 2 residues coordinate isopentenyl diphosphate: His63 and His96. Cys118 contacts [4Fe-4S] cluster. Residue His146 coordinates (2E)-4-hydroxy-3-methylbut-2-enyl diphosphate. Position 146 (His146) interacts with dimethylallyl diphosphate. Position 146 (His146) interacts with isopentenyl diphosphate. Glu148 serves as the catalytic Proton donor. Thr186 is a binding site for (2E)-4-hydroxy-3-methylbut-2-enyl diphosphate. Residue Cys216 participates in [4Fe-4S] cluster binding. (2E)-4-hydroxy-3-methylbut-2-enyl diphosphate contacts are provided by Ser244, Ser245, Asn246, and Ser289. Dimethylallyl diphosphate is bound by residues Ser244, Ser245, Asn246, and Ser289. 4 residues coordinate isopentenyl diphosphate: Ser244, Ser245, Asn246, and Ser289.

Belongs to the IspH family. [4Fe-4S] cluster is required as a cofactor.

It carries out the reaction isopentenyl diphosphate + 2 oxidized [2Fe-2S]-[ferredoxin] + H2O = (2E)-4-hydroxy-3-methylbut-2-enyl diphosphate + 2 reduced [2Fe-2S]-[ferredoxin] + 2 H(+). It catalyses the reaction dimethylallyl diphosphate + 2 oxidized [2Fe-2S]-[ferredoxin] + H2O = (2E)-4-hydroxy-3-methylbut-2-enyl diphosphate + 2 reduced [2Fe-2S]-[ferredoxin] + 2 H(+). It functions in the pathway isoprenoid biosynthesis; dimethylallyl diphosphate biosynthesis; dimethylallyl diphosphate from (2E)-4-hydroxy-3-methylbutenyl diphosphate: step 1/1. Its pathway is isoprenoid biosynthesis; isopentenyl diphosphate biosynthesis via DXP pathway; isopentenyl diphosphate from 1-deoxy-D-xylulose 5-phosphate: step 6/6. In terms of biological role, catalyzes the conversion of 1-hydroxy-2-methyl-2-(E)-butenyl 4-diphosphate (HMBPP) into a mixture of isopentenyl diphosphate (IPP) and dimethylallyl diphosphate (DMAPP). Acts in the terminal step of the DOXP/MEP pathway for isoprenoid precursor biosynthesis. This Mycobacterium sp. (strain JLS) protein is 4-hydroxy-3-methylbut-2-enyl diphosphate reductase.